We begin with the raw amino-acid sequence, 329 residues long: MTAQPQRIGFLLWPATRALTLSLAEEALRAARRLHPEALYEPLFLLAEAPAEEEGWRLPGTAWNGRLEQCSRLFLVADEAPAAVSPALGLALKQLARSGAAIGALSAGIYPLAQLGLLDGYRAAVHWRWHDDFTERFPKVIATNHLFEWDRDRMTACGGMAVLDLLLALLSRDHGAELAGAVSEELVVERIREGNERQRIPLKNRLGSSHPKLTQAVLLMEANIEEPLTTDEIAQHVCVSRRQLERIFKQYLNRVPSQYYLELRLNRARQMLMQTSKSIIQIGLSCGFSSGPHFSSAYRNFFGVTPREDRNQRRGGSAFETTFTPVERG.

One can recognise an HTH araC/xylS-type domain in the interval 214–312 (TQAVLLMEAN…GVTPREDRNQ (99 aa)). 2 consecutive DNA-binding regions (H-T-H motif) follow at residues 231 to 252 (DEIA…KQYL) and 279 to 302 (IIQI…RNFF). Residues 307-329 (REDRNQRRGGSAFETTFTPVERG) form a disordered region. Positions 319–329 (FETTFTPVERG) are enriched in polar residues.

Its function is as follows. ArgR could be a transcriptional activator of the dauBAR operon in response to the presence of L-Arg. In Pseudomonas aeruginosa (strain ATCC 15692 / DSM 22644 / CIP 104116 / JCM 14847 / LMG 12228 / 1C / PRS 101 / PAO1), this protein is HTH-type transcriptional regulator ArgR (argR).